The chain runs to 126 residues: Methylglyoxal synthase (126 aa).

The MGS-like domain maps to 1–126 (MADRKCLALI…AEQLIDFRRN (126 aa)). Substrate contacts are provided by residues His-12, Lys-16, 38–41 (TGTT), and 59–60 (SG). Catalysis depends on Asp-65, which acts as the Proton donor/acceptor. His-92 is a substrate binding site.

Belongs to the methylglyoxal synthase family.

It catalyses the reaction dihydroxyacetone phosphate = methylglyoxal + phosphate. Its function is as follows. Catalyzes the formation of methylglyoxal from dihydroxyacetone phosphate. The protein is Methylglyoxal synthase of Rhizobium meliloti (strain 1021) (Ensifer meliloti).